The chain runs to 644 residues: Pentatricopeptide repeat-containing protein At1g12775, mitochondrial (644 aa).

The transit peptide at 1–53 directs the protein to the mitochondrion; that stretch reads MVRMMIRRLSSQASRFVQPRLLETGTLRIALINCPNELLFCCERGFSTFSDRN. 15 PPR repeats span residues 87-121, 122-156, 157-191, 192-226, 227-261, 262-296, 297-331, 332-366, 367-401, 402-436, 437-471, 472-506, 507-541, 542-576, and 577-611; these read TVIDFNRLFSAIAKTKQYELVLALCKQMESKGIAH, SIYTLSIMINCFCRCRKLSYAFSTMGKIMKLGYEP, DTVIFNTLLNGLCLECRVSEALELVDRMVEMGHKP, TLITLNTLVNGLCLNGKVSDAVVLIDRMVETGFQP, NEVTYGPVLNVMCKSGQTALAMELLRKMEERNIKL, DAVKYSIIIDGLCKDGSLDNAFNLFNEMEIKGFKA, DIITYNTLIGGFCNAGRWDDGAKLLRDMIKRKISP, NVVTFSVLIDSFVKEGKLREADQLLKEMMQRGIAP, NTITYNSLIDGFCKENRLEEAIQMVDLMISKGCDP, DIMTFNILINGYCKANRIDDGLELFREMSLRGVIA, NTVTYNTLVQGFCQSGKLEVAKKLFQEMVSRRVRP, DIVSYKILLDGLCDNGELEKALEIFGKIEKSKMEL, DIGIYMIIIHGMCNASKVDDAWDLFCSLPLKGVKL, DARAYNIMISELCRKDSLSKADILFRKMTEEGHAP, and DELTYNILIRAHLGDDDATTAAELIEEMKSSGFPA.

The protein belongs to the PPR family. P subfamily.

It localises to the mitochondrion. The chain is Pentatricopeptide repeat-containing protein At1g12775, mitochondrial from Arabidopsis thaliana (Mouse-ear cress).